We begin with the raw amino-acid sequence, 642 residues long: Protein INCREASED PETAL GROWTH ANISOTROPY 1 (642 aa).

Residues 1–60 (MVAGKVRVTMGFHKSPSTKKTKDMPSPLPLPPPPPPPLKPPSSGSATTKPPINPSKPGFT) form a disordered region. Residues 26–40 (SPLPLPPPPPPPLKP) are compositionally biased toward pro residues. Positions 80–183 (AASHNGVVSE…EAEIVELRKL (104 aa)) form a coiled coil. The segment at 223–351 (NLPEPITNQE…PPKSLSIASA (129 aa)) is disordered. The span at 247 to 256 (DIYRKDEIES) shows a compositional bias: basic and acidic residues. A compositionally biased stretch (low complexity) spans 258 to 277 (SRSSNSEELTESSSLSTVRS). Pro residues predominate over residues 302–344 (DPPPQKSIPPPPPPPPPPLLQQPPPPPSVSKAPPPPPPPPPPK).

Belongs to the IPGA1 family. Associates to cortical microtubules via its N-terminal region. Interacts with ANGUSTIFOLIA (AN) on microtubule upon mechanical stress to regulate microtubule organization. Binds to the microtubule-severing enzyme KATANIN (KTN1). Expressed ubiquitously at all development stages, with highest in developing petals. During mechanical stress, accumulates in granules on microtubules.

The protein localises to the cytoplasm. The protein resides in the cytoskeleton. Its subcellular location is the cytosol. It localises to the cell membrane. Microtubule-associated protein involved in the regulation of anisotropic petal and cotyledons growth and shape by affecting cortical microtubule organization. Prevents cortical microtubules organization into parallel arrays oriented perpendicular to the axis of cell elongation thus limiting anisotropic cell growth in the late phases of petal development. Cooperatively with ANGUSTIFOLIA (AN), negatively regulates cortical microtubules (CMTs) organization in response to mechanical stress and modulates pavement cells morphogenesis leading to puzzle shape, probably in an AAA1/KTN1-dependent manner. The polypeptide is Protein INCREASED PETAL GROWTH ANISOTROPY 1 (Arabidopsis thaliana (Mouse-ear cress)).